The primary structure comprises 499 residues: uncharacterized protein (499 aa).

Helical transmembrane passes span Phe5–Val25, Leu79–Leu99, Ala110–Ala130, Pro132–Thr152, Val170–Leu190, Tyr203–Val223, Ala252–Trp272, Val286–Ile306, Leu332–Phe352, Phe354–Tyr374, and Leu377–Val397.

Belongs to the glycosyltransferase 39 family.

Its subcellular location is the cell membrane. This is an uncharacterized protein from Aquifex aeolicus (strain VF5).